Here is a 584-residue protein sequence, read N- to C-terminus: MKYRTHRCNELTSNHIGENVQLAGWVHRYRNHGGVVFIDLRDRFGITQIVCREDEQPELHQRLDAVRSEWVLSVRGKVCPRLAGMENPNLATGHIEVEVASFEVLSKSQNLPFSIADDHINVNEELRLEYRYLDMRRGDIIEKLLCRHQVMLACRNFMDAQGFTEIVTPVLGKSTPEGARDYLVPSRIYPGKFYALPQSPQLFKQLLMVGGLDRYFQIATCFRDEDLRADRQPEFAQIDIEMSFGDTQDLLPIIEQLVATLFATQGIEIPLPLAKMTYQEAKDSYGTDKPDLRFDLKLKDCRDYAKRSSFSIFLDQLAHGGTIKGFCVPGGATMSRKQLDGYTEFVKRYGAMGLVWIKNQEGKVASNIAKFMDEEVFHELFAYFDAKDQDILLLIAAPESVANQSLDHLRRLIAKERELYSDNQYNFVWITDFPLFSLEDGKIVAEHHPFTAPLEEDIPLLETDPLAVRSSSYDLVLNGYEIASGSQRIHNPDLQSQIFTILKISPESIQEKFGFFIKALSFGTPPHLGIALGLDRLVMVLTAAESIREVIAFPKTQKASDLMMNAPSEIMSSQLKELSIKVAF.

Residue Glu177 coordinates L-aspartate. The segment at 201–204 (QLFK) is aspartate. Arg223 is an L-aspartate binding site. ATP contacts are provided by residues 223 to 225 (RDE) and Gln232. His447 contacts L-aspartate. Position 481 (Glu481) interacts with ATP. Arg488 is an L-aspartate binding site. Position 533–536 (533–536 (GLDR)) interacts with ATP.

The protein belongs to the class-II aminoacyl-tRNA synthetase family. Type 1 subfamily. Homodimer.

The protein resides in the cytoplasm. It carries out the reaction tRNA(Asx) + L-aspartate + ATP = L-aspartyl-tRNA(Asx) + AMP + diphosphate. Its function is as follows. Aspartyl-tRNA synthetase with relaxed tRNA specificity since it is able to aspartylate not only its cognate tRNA(Asp) but also tRNA(Asn). Reaction proceeds in two steps: L-aspartate is first activated by ATP to form Asp-AMP and then transferred to the acceptor end of tRNA(Asp/Asn). The chain is Aspartate--tRNA(Asp/Asn) ligase from Chlamydia pneumoniae (Chlamydophila pneumoniae).